A 345-amino-acid chain; its full sequence is Protein-glutamate methylesterase/protein-glutamine glutaminase 1 (345 aa).

One can recognise a Response regulatory domain in the interval 8–123 (SVLVIDDSAH…FEAMEALRVE (116 aa)). Asp59 carries the post-translational modification 4-aspartylphosphate. The 194-residue stretch at 151 to 344 (AGEPPLVVAV…PALAALARRR (194 aa)) folds into the CheB-type methylesterase domain. Active-site residues include Ser163, His190, and Asp286.

This sequence belongs to the CheB family. In terms of processing, phosphorylated by CheA. Phosphorylation of the N-terminal regulatory domain activates the methylesterase activity.

Its subcellular location is the cytoplasm. It catalyses the reaction [protein]-L-glutamate 5-O-methyl ester + H2O = L-glutamyl-[protein] + methanol + H(+). The enzyme catalyses L-glutaminyl-[protein] + H2O = L-glutamyl-[protein] + NH4(+). Its function is as follows. Involved in chemotaxis. Part of a chemotaxis signal transduction system that modulates chemotaxis in response to various stimuli. Catalyzes the demethylation of specific methylglutamate residues introduced into the chemoreceptors (methyl-accepting chemotaxis proteins or MCP) by CheR. Also mediates the irreversible deamidation of specific glutamine residues to glutamic acid. This Myxococcus xanthus (strain DK1622) protein is Protein-glutamate methylesterase/protein-glutamine glutaminase 1.